The sequence spans 515 residues: Probable cytochrome P450 6d4 (515 aa).

A heme-binding site is contributed by Cys-457.

It belongs to the cytochrome P450 family. Heme is required as a cofactor.

It localises to the endoplasmic reticulum membrane. The protein resides in the microsome membrane. Its function is as follows. May be involved in the metabolism of insect hormones and in the breakdown of synthetic insecticides. In Drosophila melanogaster (Fruit fly), this protein is Probable cytochrome P450 6d4 (Cyp6d4).